A 538-amino-acid polypeptide reads, in one-letter code: Xylosidase/arabinosidase 43B (538 aa).

Residue E367 is the Proton donor of the active site.

The protein belongs to the glycosyl hydrolase 43 family.

The enzyme catalyses Hydrolysis of (1-&gt;4)-beta-D-xylans, to remove successive D-xylose residues from the non-reducing termini.. It carries out the reaction Hydrolysis of terminal non-reducing alpha-L-arabinofuranoside residues in alpha-L-arabinosides.. With respect to regulation, activity is inhibited by Ag(+), Li(+), Cu(2+), Cr(3+), Co(3+), Ni(2+), Mg(2+), Zn(2+), EDTA, SDS and beta-mercaptoethanol; but not by Mn(2+), Pb(2+), Ca(2+) and Fe(3+). Functionally, bifunctional beta-xylosidase/alpha-L-arabinosidases with a low level of xylanase activity. Is most active on 4-nitrophenyl beta-D-xylopyranoside (pNPX) (defined as 100%), moderate on p-nitrophenyl-alpha-L-arabinofuranoside (pNPA) (56.6%), and weak on beechwood xylan (5.7%) and birchwood xylan (2.7%). Is able to attack xylooligosacchardies with degrees of polymerisation of 2-5, releasing the amounts of reducing sugars in the order of xylopentose &gt; xylotetraose &gt; xylotriose &gt; xylobiose, i.e. the rate of xylose released from xylooligosacchardies increased with the chain length. No activity was detected in the presence of carboxymethyl cellulose-sodium (CMC-Na), sugar beet arabinan, AZCL-arabinan (debranched), 4-nitrophenyl a-D - galactopyranoside, 2-nitrophenyl beta-D-galactopyranoside, and 4-nitrophenyl alpha-D-glucopyranoside. This is Xylosidase/arabinosidase 43B from Humicola insolens (Soft-rot fungus).